Here is a 306-residue protein sequence, read N- to C-terminus: UDP-N-acetylenolpyruvoylglucosamine reductase (306 aa).

The 165-residue stretch at 34-198 (VGGPADLLIT…LEVTFKLHNS (165 aa)) folds into the FAD-binding PCMH-type domain. Arg177 is a catalytic residue. Ser227 (proton donor) is an active-site residue. Glu297 is an active-site residue.

Belongs to the MurB family. FAD serves as cofactor.

The protein resides in the cytoplasm. It catalyses the reaction UDP-N-acetyl-alpha-D-muramate + NADP(+) = UDP-N-acetyl-3-O-(1-carboxyvinyl)-alpha-D-glucosamine + NADPH + H(+). Its pathway is cell wall biogenesis; peptidoglycan biosynthesis. In terms of biological role, cell wall formation. The protein is UDP-N-acetylenolpyruvoylglucosamine reductase of Clostridium botulinum (strain Okra / Type B1).